Consider the following 326-residue polypeptide: MASKAGLGQTPATTDARRTQKFYRGSPGRPWLIGAVVIPLLIAAIGYGAFERPQSVTGPTGVLPTLTPTSTRGASALSLSLLSISRSGNTVTLIGDFPDEAAKAALMTALNGLLAPGVNVIDQIHVDPVVRSLDFSSAEPVFTASVPIPDFGLKVERDTVTLTGTAPSSEHKDAVKRAATSTWPDMKIVNNIEVTGQAPPGPPASGPCADLQSAINAVTGGPIAFGNDGASLIPADYEILNRVADKLKACPDARVTINGYTDNTGSEGINIPLSAQRAKIVADYLVARGVAGDHIATVGLGSVNPIASNATPEGRAKNRRVEIVVN.

The tract at residues 1–21 (MASKAGLGQTPATTDARRTQK) is disordered. The required for protein translocation to the outer membrane stretch occupies residues 1–73 (MASKAGLGQT…PTLTPTSTRG (73 aa)). A helical transmembrane segment spans residues 30–50 (PWLIGAVVIPLLIAAIGYGAF). The region spanning 127 to 196 (DPVVRSLDFS…KIVNNIEVTG (70 aa)) is the BON domain. Cys-208 and Cys-250 are oxidised to a cystine. One can recognise an OmpA-like domain in the interval 212–326 (QSAINAVTGG…KNRRVEIVVN (115 aa)).

It belongs to the outer membrane OOP (TC 1.B.6) superfamily. ArfA family. Requires Zn(2+) as cofactor.

It localises to the secreted. The protein resides in the cell wall. The protein localises to the cell outer membrane. Its function is as follows. Probably plays a role in ammonia secretion that neutralizes the medium at pH 5.5, although it does not play a direct role in ammonia transport. This chain is Peptidoglycan-binding protein ArfA (arfA), found in Mycobacterium tuberculosis (strain CDC 1551 / Oshkosh).